A 283-amino-acid chain; its full sequence is Putative S-adenosyl-L-methionine-dependent methyltransferase SCO7813 (283 aa).

Residues Asp-121 and 150–151 (DL) each bind S-adenosyl-L-methionine. The disordered stretch occupies residues 264–283 (MSTLPQHEDGPGGLISAVRR).

The protein belongs to the UPF0677 family.

Functionally, exhibits S-adenosyl-L-methionine-dependent methyltransferase activity. This is Putative S-adenosyl-L-methionine-dependent methyltransferase SCO7813 from Streptomyces coelicolor (strain ATCC BAA-471 / A3(2) / M145).